We begin with the raw amino-acid sequence, 264 residues long: Thymidylate synthase (264 aa).

Arginine 21 lines the dUMP pocket. Residue histidine 51 participates in (6R)-5,10-methylene-5,6,7,8-tetrahydrofolate binding. Residue 126–127 coordinates dUMP; the sequence is RR. The active-site Nucleophile is cysteine 146. DUMP is bound by residues 166-169, asparagine 177, and 207-209; these read RSGD and HLY. A (6R)-5,10-methylene-5,6,7,8-tetrahydrofolate-binding site is contributed by aspartate 169. Residue alanine 263 coordinates (6R)-5,10-methylene-5,6,7,8-tetrahydrofolate.

The protein belongs to the thymidylate synthase family. Bacterial-type ThyA subfamily. As to quaternary structure, homodimer.

Its subcellular location is the cytoplasm. It carries out the reaction dUMP + (6R)-5,10-methylene-5,6,7,8-tetrahydrofolate = 7,8-dihydrofolate + dTMP. It functions in the pathway pyrimidine metabolism; dTTP biosynthesis. In terms of biological role, catalyzes the reductive methylation of 2'-deoxyuridine-5'-monophosphate (dUMP) to 2'-deoxythymidine-5'-monophosphate (dTMP) while utilizing 5,10-methylenetetrahydrofolate (mTHF) as the methyl donor and reductant in the reaction, yielding dihydrofolate (DHF) as a by-product. This enzymatic reaction provides an intracellular de novo source of dTMP, an essential precursor for DNA biosynthesis. This chain is Thymidylate synthase, found in Xanthomonas axonopodis pv. citri (strain 306).